The primary structure comprises 241 residues: Protein-L-isoaspartate O-methyltransferase (241 aa).

Residue serine 69 is part of the active site.

The protein belongs to the methyltransferase superfamily. L-isoaspartyl/D-aspartyl protein methyltransferase family.

It localises to the cytoplasm. It catalyses the reaction [protein]-L-isoaspartate + S-adenosyl-L-methionine = [protein]-L-isoaspartate alpha-methyl ester + S-adenosyl-L-homocysteine. Its function is as follows. Catalyzes the methyl esterification of L-isoaspartyl residues in peptides and proteins that result from spontaneous decomposition of normal L-aspartyl and L-asparaginyl residues. It plays a role in the repair and/or degradation of damaged proteins. The sequence is that of Protein-L-isoaspartate O-methyltransferase from Hyperthermus butylicus (strain DSM 5456 / JCM 9403 / PLM1-5).